Reading from the N-terminus, the 183-residue chain is Inner membrane protein p54 (183 aa).

Residues 32 to 52 (YTILIAIVVLVIIIIVLIYLF) traverse the membrane as a helical segment. The segment at 81-157 (EVTPQPGTSK…PYTTVTTQNT (77 aa)) is disordered. Over residues 111-122 (RPATNKPVTDNP) the composition is skewed to polar residues. The segment covering 130–143 (ATGGPAAAPAAASA) has biased composition (low complexity). Positions 149-161 (YTTVTTQNTASQT) are interaction with host DYNLL1.

The protein belongs to the asfivirus envelope protein p54 family. As to quaternary structure, interacts with the host light chain cytoplasmic dynein DYNLL1; this interaction is critical for intracellular microtubule-dependent virus transport toward viral factories.

The protein resides in the virion membrane. It localises to the host cytoplasm. Its subcellular location is the host cytoskeleton. The protein localises to the host endoplasmic reticulum membrane. Functionally, inner envelope protein involved, through its interaction with host dynein, in the intracellular microtubule-dependent transport of viral capsid toward viral factories. Seems to induce caspase-3 activation and apoptosis. Plays a role in virion morphogenesis by recruiting and transforming the host ER membranes into the precursors of the viral envelope. Involved in virus attachment to the host cell. The protein is Inner membrane protein p54 of Ornithodoros (relapsing fever ticks).